Reading from the N-terminus, the 1072-residue chain is Carbamoyl phosphate synthase large chain (1072 aa).

A carboxyphosphate synthetic domain region spans residues 1-401 (MPKRLDINTI…SLLKAVRSLE (401 aa)). ATP-binding residues include Arg-129, Arg-169, Gly-175, Gly-176, Lys-208, Ile-210, Glu-215, Gly-241, Val-242, His-243, Gln-284, and Glu-298. The 195-residue stretch at 133–327 (RTLMQDLNEP…IAKLAAKIAV (195 aa)) folds into the ATP-grasp 1 domain. 3 residues coordinate Mg(2+): Gln-284, Glu-298, and Asn-300. 3 residues coordinate Mn(2+): Gln-284, Glu-298, and Asn-300. The interval 402–546 (LGIYHLELDH…YSTYADENES (145 aa)) is oligomerization domain. The carbamoyl phosphate synthetic domain stretch occupies residues 547–929 (IVTDRKSVVV…ALYKGLVASG (383 aa)). In terms of domain architecture, ATP-grasp 2 spans 671 to 861 (EAALTKLGIP…MANVATKVIL (191 aa)). Residues Arg-707, Arg-746, Glu-752, Gly-777, Val-778, His-779, Ser-780, Gln-820, and Glu-832 each coordinate ATP. Positions 820, 832, and 834 each coordinate Mg(2+). Residues Gln-820, Glu-832, and Asn-834 each contribute to the Mn(2+) site. The MGS-like domain occupies 930–1072 (INIPTHGSVI…QTKRHEVVHA (143 aa)). The allosteric domain stretch occupies residues 930 to 1072 (INIPTHGSVI…QTKRHEVVHA (143 aa)).

It belongs to the CarB family. In terms of assembly, composed of two chains; the small (or glutamine) chain promotes the hydrolysis of glutamine to ammonia, which is used by the large (or ammonia) chain to synthesize carbamoyl phosphate. Tetramer of heterodimers (alpha,beta)4. It depends on Mg(2+) as a cofactor. Mn(2+) serves as cofactor.

It catalyses the reaction hydrogencarbonate + L-glutamine + 2 ATP + H2O = carbamoyl phosphate + L-glutamate + 2 ADP + phosphate + 2 H(+). It carries out the reaction hydrogencarbonate + NH4(+) + 2 ATP = carbamoyl phosphate + 2 ADP + phosphate + 2 H(+). It functions in the pathway amino-acid biosynthesis; L-arginine biosynthesis; carbamoyl phosphate from bicarbonate: step 1/1. It participates in pyrimidine metabolism; UMP biosynthesis via de novo pathway; (S)-dihydroorotate from bicarbonate: step 1/3. Large subunit of the glutamine-dependent carbamoyl phosphate synthetase (CPSase). CPSase catalyzes the formation of carbamoyl phosphate from the ammonia moiety of glutamine, carbonate, and phosphate donated by ATP, constituting the first step of 2 biosynthetic pathways, one leading to arginine and/or urea and the other to pyrimidine nucleotides. The large subunit (synthetase) binds the substrates ammonia (free or transferred from glutamine from the small subunit), hydrogencarbonate and ATP and carries out an ATP-coupled ligase reaction, activating hydrogencarbonate by forming carboxy phosphate which reacts with ammonia to form carbamoyl phosphate. The sequence is that of Carbamoyl phosphate synthase large chain from Bacillus cereus (strain ATCC 14579 / DSM 31 / CCUG 7414 / JCM 2152 / NBRC 15305 / NCIMB 9373 / NCTC 2599 / NRRL B-3711).